Here is a 96-residue protein sequence, read N- to C-terminus: Aspartyl/glutamyl-tRNA(Asn/Gln) amidotransferase subunit C (96 aa).

The protein belongs to the GatC family. In terms of assembly, heterotrimer of A, B and C subunits.

It catalyses the reaction L-glutamyl-tRNA(Gln) + L-glutamine + ATP + H2O = L-glutaminyl-tRNA(Gln) + L-glutamate + ADP + phosphate + H(+). The enzyme catalyses L-aspartyl-tRNA(Asn) + L-glutamine + ATP + H2O = L-asparaginyl-tRNA(Asn) + L-glutamate + ADP + phosphate + 2 H(+). Functionally, allows the formation of correctly charged Asn-tRNA(Asn) or Gln-tRNA(Gln) through the transamidation of misacylated Asp-tRNA(Asn) or Glu-tRNA(Gln) in organisms which lack either or both of asparaginyl-tRNA or glutaminyl-tRNA synthetases. The reaction takes place in the presence of glutamine and ATP through an activated phospho-Asp-tRNA(Asn) or phospho-Glu-tRNA(Gln). The sequence is that of Aspartyl/glutamyl-tRNA(Asn/Gln) amidotransferase subunit C from Exiguobacterium sibiricum (strain DSM 17290 / CCUG 55495 / CIP 109462 / JCM 13490 / 255-15).